A 371-amino-acid chain; its full sequence is Cysteine proteinase 1 (371 aa).

Positions 1–18 (MAHRVLLLLSLASAAAVA) are cleaved as a signal peptide. A propeptide spans 19 to 136 (AAVDAEDPLI…HEAPVLPTDG (118 aa)) (activation peptide). Intrachain disulfides connect cysteine 158/cysteine 208 and cysteine 192/cysteine 241. The active site involves cysteine 161. Residue asparagine 254 is glycosylated (N-linked (GlcNAc...) asparagine). Cysteine 297 and cysteine 354 are joined by a disulfide. Catalysis depends on residues histidine 303 and asparagine 330.

It belongs to the peptidase C1 family. As to expression, expressed during the late stages of seed ripening, in mature seeds and during germination.

Functionally, involved in the degradation of the storage protein zein. May play a role in proteolysis during emergencies. The chain is Cysteine proteinase 1 (CCP1) from Zea mays (Maize).